The primary structure comprises 631 residues: UvrABC system protein C (631 aa).

The segment at 1–20 is disordered; the sequence is MKNETEAVADQPPKTGPVKP. Residues 34–112 form the GIY-YIG domain; that stretch reads MSPGVYRMLD…IKQLKPKFNV (79 aa). The UVR domain occupies 222–257; the sequence is TDLQRQLADGMAAASEAMEFERAAALRDRIRALTNV.

The protein belongs to the UvrC family. In terms of assembly, interacts with UvrB in an incision complex.

It localises to the cytoplasm. In terms of biological role, the UvrABC repair system catalyzes the recognition and processing of DNA lesions. UvrC both incises the 5' and 3' sides of the lesion. The N-terminal half is responsible for the 3' incision and the C-terminal half is responsible for the 5' incision. This chain is UvrABC system protein C, found in Jannaschia sp. (strain CCS1).